The primary structure comprises 159 residues: uncharacterized protein (159 aa).

This is an uncharacterized protein from Homo sapiens (Human).